Consider the following 375-residue polypeptide: Phospho-N-acetylmuramoyl-pentapeptide-transferase (375 aa).

A run of 10 helical transmembrane segments spans residues 2 to 22 (IGLLIGGVLGLVLSAAGTPLF), 55 to 75 (AVIIGSLVLAYLITHGLLAVL), 82 to 102 (PTASGLILLLLTVGMAFVGFV), 120 to 140 (GKIILQALIGTAFAVLALNFP), 158 to 178 (IPWLDLAFAGPAIGVILFVIW), 198 to 218 (GLATGATAMITGAYVLISLFQ), 237 to 257 (PMDLALLAAILTGSLLGFLWW), 264 to 284 (IFMGDTGSLGLGGALAGFAIF), 289 to 309 (ILVAVLAGLMVAITLSVIIQV), and 345 to 365 (WLLSLMCVTVGLAIFYGDWLI).

The protein belongs to the glycosyltransferase 4 family. MraY subfamily. The cofactor is Mg(2+).

It localises to the cell membrane. It carries out the reaction UDP-N-acetyl-alpha-D-muramoyl-L-alanyl-gamma-D-glutamyl-meso-2,6-diaminopimeloyl-D-alanyl-D-alanine + di-trans,octa-cis-undecaprenyl phosphate = di-trans,octa-cis-undecaprenyl diphospho-N-acetyl-alpha-D-muramoyl-L-alanyl-D-glutamyl-meso-2,6-diaminopimeloyl-D-alanyl-D-alanine + UMP. Its pathway is cell wall biogenesis; peptidoglycan biosynthesis. Catalyzes the initial step of the lipid cycle reactions in the biosynthesis of the cell wall peptidoglycan: transfers peptidoglycan precursor phospho-MurNAc-pentapeptide from UDP-MurNAc-pentapeptide onto the lipid carrier undecaprenyl phosphate, yielding undecaprenyl-pyrophosphoryl-MurNAc-pentapeptide, known as lipid I. In Micrococcus luteus (strain ATCC 4698 / DSM 20030 / JCM 1464 / CCM 169 / CCUG 5858 / IAM 1056 / NBRC 3333 / NCIMB 9278 / NCTC 2665 / VKM Ac-2230) (Micrococcus lysodeikticus), this protein is Phospho-N-acetylmuramoyl-pentapeptide-transferase.